We begin with the raw amino-acid sequence, 505 residues long: Cytochrome P450 monooxygenase FGM1 (505 aa).

An N-terminal signal peptide occupies residues Met-1–Ala-23. Residues Asn-188 and Asn-351 are each glycosylated (N-linked (GlcNAc...) asparagine). Residue Cys-450 participates in heme binding.

Belongs to the cytochrome P450 family. It depends on heme as a cofactor.

The protein operates within secondary metabolite biosynthesis. In terms of biological role, cytochrome P450 monooxygenase; part of the Fg3_54/C64 gene cluster that mediates the biosynthesis of the octapeptide fusaoctaxin A, a virulence factor that is required for cell-to-cell invasiveness of plant host. The 2 nonribosomal peptide synthetases NRPS9 and NRPS5 form an assembly line which likely utilizes GABA as a starter unit (loaded on the unique module M1 of NRPS9) and sequentially incorporates seven extender units composed of the residues L-Ala, L-allo-Ile, L-Ser, L-Val, L-Ser, L-Leu and L-Leu, respectively. During the process, each of the residues that are tethered on modules M3-M7 of NRPS5 containing an E domain can undergo an epimerization reaction to produce a D-configuration before the transpeptidation reaction occurs. The elongation of the peptidyl chain might be terminated by module M8-mediated L-Leu incorporation, followed by R domain-catalyzed 4 electron reduction to release the resulting octapeptide from the assembly line as an alcohol. Fusaoctaxin A is cleaved by the cluster specific ABC transporter FGM5 to the pentapeptide fusapentaxin A and the tripeptide fusatrixin A. The other enzymes from the cluster, FGM1, FGM2, FGM3 and FGM9 seem not to be involved in the biosynthesis of fusaoctaxin A and their functions have still to be determined. The chain is Cytochrome P450 monooxygenase FGM1 from Gibberella zeae (strain ATCC MYA-4620 / CBS 123657 / FGSC 9075 / NRRL 31084 / PH-1) (Wheat head blight fungus).